A 602-amino-acid chain; its full sequence is Elongation factor 4 (602 aa).

The tr-type G domain maps to 6-188; sequence KYIRNFCIIA…AIIRRVPPPR (183 aa). GTP is bound by residues 18–23 and 135–138; these read DHGKST and NKID.

The protein belongs to the TRAFAC class translation factor GTPase superfamily. Classic translation factor GTPase family. LepA subfamily.

Its subcellular location is the cell membrane. It carries out the reaction GTP + H2O = GDP + phosphate + H(+). Its function is as follows. Required for accurate and efficient protein synthesis under certain stress conditions. May act as a fidelity factor of the translation reaction, by catalyzing a one-codon backward translocation of tRNAs on improperly translocated ribosomes. Back-translocation proceeds from a post-translocation (POST) complex to a pre-translocation (PRE) complex, thus giving elongation factor G a second chance to translocate the tRNAs correctly. Binds to ribosomes in a GTP-dependent manner. In Moorella thermoacetica (strain ATCC 39073 / JCM 9320), this protein is Elongation factor 4.